Reading from the N-terminus, the 1167-residue chain is RNA-directed RNA polymerase (1167 aa).

The 183-residue stretch at 553–735 folds into the RdRp catalytic domain; that stretch reads LTYGILAEAT…KALASYTGLE (183 aa).

The protein belongs to the reoviridae RNA-directed RNA polymerase family. Interacts with VP3 (Potential). Interacts with VP2 (Potential). Interacts with NSP5; this interaction is probably necessary for the formation of functional virus factories.

Its subcellular location is the virion. The catalysed reaction is RNA(n) + a ribonucleoside 5'-triphosphate = RNA(n+1) + diphosphate. Functionally, RNA-directed RNA polymerase that is involved in both transcription and genome replication. Together with VP3 capping enzyme, forms an enzyme complex positioned near the channels situated at each of the five-fold vertices of the core. Following infection, the outermost layer of the virus is lost, leaving a double-layered particle (DLP) made up of the core and VP6 shell. VP1 then catalyzes the transcription of fully conservative plus-strand genomic RNAs that are extruded through the DLP's channels into the cytoplasm where they function as mRNAs for translation of viral proteins. One copy of each of the viral (+)RNAs is also recruited during core assembly, together with newly synthesized polymerase complexes and VP2. The polymerase of these novo-formed particles catalyzes the synthesis of complementary minus-strands leading to dsDNA formation. To do so, the polymerase specifically recognizes conserved 3' sequence(s) in plus-strand RNA templates. Once dsRNA synthesis is complete, the polymerase switches to the transcriptional mode, thus providing secondary transcription. In Rotavirus X (strain RVX/Human/China/NADRV-J19/1997/GXP[X]) (RV ADRV-N), this protein is RNA-directed RNA polymerase.